Here is a 218-residue protein sequence, read N- to C-terminus: Variable small protein 8 (218 aa).

The first 18 residues, 1-18 (MRKRISAIIMTLFMVFMS), serve as a signal peptide directing secretion. The N-palmitoyl cysteine moiety is linked to residue Cys19. Cys19 carries S-diacylglycerol cysteine lipidation.

Belongs to the variable small protein (Vsp) family.

It is found in the cell outer membrane. Functionally, the Vlp and Vsp proteins are antigenically distinct proteins, only one vlp or vsp gene is transcriptionally active at any one time. Switching between these genes is a mechanism of host immune response evasion. This chain is Variable small protein 8, found in Borrelia hermsii.